We begin with the raw amino-acid sequence, 135 residues long: NADPH-dependent 7-cyano-7-deazaguanine reductase (135 aa).

C48 functions as the Thioimide intermediate in the catalytic mechanism. Catalysis depends on D55, which acts as the Proton donor. Residues 70-72 (LEL) and 89-90 (HE) contribute to the substrate site.

It belongs to the GTP cyclohydrolase I family. QueF type 1 subfamily.

The protein localises to the cytoplasm. The enzyme catalyses 7-aminomethyl-7-carbaguanine + 2 NADP(+) = 7-cyano-7-deazaguanine + 2 NADPH + 3 H(+). The protein operates within tRNA modification; tRNA-queuosine biosynthesis. Its function is as follows. Catalyzes the NADPH-dependent reduction of 7-cyano-7-deazaguanine (preQ0) to 7-aminomethyl-7-deazaguanine (preQ1). The protein is NADPH-dependent 7-cyano-7-deazaguanine reductase of Prochlorococcus marinus (strain SARG / CCMP1375 / SS120).